We begin with the raw amino-acid sequence, 775 residues long: 5-methyltetrahydropteroyltriglutamate--homocysteine methyltransferase (775 aa).

5-methyltetrahydropteroyltri-L-glutamate is bound by residues 16-19 (REMK) and Lys-115. L-homocysteine contacts are provided by residues 435–437 (IGS) and Glu-488. Residues 435–437 (IGS) and Glu-488 contribute to the L-methionine site. 5-methyltetrahydropteroyltri-L-glutamate is bound by residues 519–520 (RC) and Trp-565. Asp-603 serves as a coordination point for L-homocysteine. Residue Asp-603 coordinates L-methionine. Glu-609 lines the 5-methyltetrahydropteroyltri-L-glutamate pocket. His-645, Cys-647, and Glu-669 together coordinate Zn(2+). The Proton donor role is filled by His-698. Residue Cys-730 coordinates Zn(2+).

This sequence belongs to the vitamin-B12 independent methionine synthase family. It depends on Zn(2+) as a cofactor.

It carries out the reaction 5-methyltetrahydropteroyltri-L-glutamate + L-homocysteine = tetrahydropteroyltri-L-glutamate + L-methionine. It functions in the pathway amino-acid biosynthesis; L-methionine biosynthesis via de novo pathway; L-methionine from L-homocysteine (MetE route): step 1/1. Its function is as follows. Catalyzes the transfer of a methyl group from 5-methyltetrahydrofolate to homocysteine resulting in methionine formation. This is 5-methyltetrahydropteroyltriglutamate--homocysteine methyltransferase from Coxiella burnetii (strain RSA 331 / Henzerling II).